Consider the following 430-residue polypeptide: Formate-dependent phosphoribosylglycinamide formyltransferase (430 aa).

Residues 26-27 (EL) and glutamate 86 contribute to the N(1)-(5-phospho-beta-D-ribosyl)glycinamide site. ATP is bound by residues arginine 118, lysine 159, 199 to 202 (EEHI), and glutamate 207. Positions 123-319 (ETLVKEAKVP…EFALHLRAVL (197 aa)) constitute an ATP-grasp domain. Mg(2+) contacts are provided by glutamate 276 and glutamate 288. N(1)-(5-phospho-beta-D-ribosyl)glycinamide-binding positions include aspartate 295, lysine 375, and 382–383 (RR).

The protein belongs to the PurK/PurT family. Homodimer.

It catalyses the reaction N(1)-(5-phospho-beta-D-ribosyl)glycinamide + formate + ATP = N(2)-formyl-N(1)-(5-phospho-beta-D-ribosyl)glycinamide + ADP + phosphate + H(+). It functions in the pathway purine metabolism; IMP biosynthesis via de novo pathway; N(2)-formyl-N(1)-(5-phospho-D-ribosyl)glycinamide from N(1)-(5-phospho-D-ribosyl)glycinamide (formate route): step 1/1. Involved in the de novo purine biosynthesis. Catalyzes the transfer of formate to 5-phospho-ribosyl-glycinamide (GAR), producing 5-phospho-ribosyl-N-formylglycinamide (FGAR). Formate is provided by PurU via hydrolysis of 10-formyl-tetrahydrofolate. This chain is Formate-dependent phosphoribosylglycinamide formyltransferase, found in Pyrococcus horikoshii (strain ATCC 700860 / DSM 12428 / JCM 9974 / NBRC 100139 / OT-3).